A 101-amino-acid chain; its full sequence is Phosphoribosyl-AMP cyclohydrolase (101 aa).

D71 lines the Mg(2+) pocket. A Zn(2+)-binding site is contributed by C72. The Mg(2+) site is built by D73 and D75. Zn(2+) is bound by residues C88 and C95.

This sequence belongs to the PRA-CH family. As to quaternary structure, homodimer. The cofactor is Mg(2+). Requires Zn(2+) as cofactor.

Its subcellular location is the cytoplasm. It carries out the reaction 1-(5-phospho-beta-D-ribosyl)-5'-AMP + H2O = 1-(5-phospho-beta-D-ribosyl)-5-[(5-phospho-beta-D-ribosylamino)methylideneamino]imidazole-4-carboxamide. Its pathway is amino-acid biosynthesis; L-histidine biosynthesis; L-histidine from 5-phospho-alpha-D-ribose 1-diphosphate: step 3/9. Its function is as follows. Catalyzes the hydrolysis of the adenine ring of phosphoribosyl-AMP. This Bacillus cereus (strain 03BB102) protein is Phosphoribosyl-AMP cyclohydrolase.